We begin with the raw amino-acid sequence, 112 residues long: Macrodomain Ori protein (112 aa).

The tract at residues phenylalanine 91–aspartate 112 is disordered. The span at glycine 103 to aspartate 112 shows a compositional bias: acidic residues.

It belongs to the MaoP family.

Involved in the organization of the Ori region of the chromosome into a macrodomain (MD). It constrains DNA mobility in the Ori macrodomain and limits long-distance DNA interactions with other chromosomal regions. The polypeptide is Macrodomain Ori protein (Salmonella choleraesuis (strain SC-B67)).